Here is a 363-residue protein sequence, read N- to C-terminus: Type-2 angiotensin II receptor (363 aa).

Topologically, residues M1 to E45 are extracellular. N-linked (GlcNAc...) asparagine glycosylation is found at N4, N13, N24, N29, and N34. Intrachain disulfides connect C35–C290 and C117–C195. A helical transmembrane segment spans residues A46–C70. Topologically, residues C71–S80 are cytoplasmic. Residues I81 to Y104 form a helical membrane-spanning segment. Angiotensin II-binding residues include Y103 and Y104. The Extracellular segment spans residues S105 to P114. A helical membrane pass occupies residues V115–V140. Over D141–Q159 the chain is Cytoplasmic. A helical membrane pass occupies residues A160–F181. Angiotensin II is bound by residues R182, Y204, and K215. Topologically, residues R182–Q206 are extracellular. A helical membrane pass occupies residues W207–F232. The Cytoplasmic portion of the chain corresponds to G233–M257. The helical transmembrane segment at A258 to L281 threads the bilayer. Angiotensin II is bound at residue D279. At T282–A294 the chain is on the extracellular side. The chain crosses the membrane as a helical span at residues V295 to F320. D297 contributes to the angiotensin II binding site. Topologically, residues V321–S363 are cytoplasmic. The tract at residues R324–F333 is helix VIII. S354 is modified (phosphoserine; by PKC).

This sequence belongs to the G-protein coupled receptor 1 family. In terms of assembly, interacts with MTUS1. Expressed at highest levels in adrenal gland and uterus.

The protein resides in the cell membrane. Its function is as follows. Receptor for angiotensin II, a vasoconstricting peptide. Signals primarily via a non-canonical G-protein- and beta-arrestin independent pathways. Cooperates with MTUS1 to inhibit ERK2 activation and cell proliferation. This Mus musculus (Mouse) protein is Type-2 angiotensin II receptor.